The chain runs to 539 residues: Glucose-6-phosphate isomerase (539 aa).

Catalysis depends on E353, which acts as the Proton donor. Active-site residues include H384 and K505.

It belongs to the GPI family.

Its subcellular location is the cytoplasm. The catalysed reaction is alpha-D-glucose 6-phosphate = beta-D-fructose 6-phosphate. It participates in carbohydrate biosynthesis; gluconeogenesis. The protein operates within carbohydrate degradation; glycolysis; D-glyceraldehyde 3-phosphate and glycerone phosphate from D-glucose: step 2/4. Catalyzes the reversible isomerization of glucose-6-phosphate to fructose-6-phosphate. The polypeptide is Glucose-6-phosphate isomerase (Ralstonia pickettii (strain 12J)).